Consider the following 362-residue polypeptide: 3-isopropylmalate dehydrogenase (362 aa).

Residue 78 to 91 (GYKWDSLPPHQRPE) coordinates NAD(+). R98, R108, R136, and D226 together coordinate substrate. Residues D226, D250, and D254 each coordinate Mg(2+). 284–296 (GSAPDIAGQDKAN) is a binding site for NAD(+).

The protein belongs to the isocitrate and isopropylmalate dehydrogenases family. LeuB type 1 subfamily. As to quaternary structure, homodimer. Mg(2+) serves as cofactor. Mn(2+) is required as a cofactor.

It is found in the cytoplasm. It catalyses the reaction (2R,3S)-3-isopropylmalate + NAD(+) = 4-methyl-2-oxopentanoate + CO2 + NADH. It participates in amino-acid biosynthesis; L-leucine biosynthesis; L-leucine from 3-methyl-2-oxobutanoate: step 3/4. In terms of biological role, catalyzes the oxidation of 3-carboxy-2-hydroxy-4-methylpentanoate (3-isopropylmalate) to 3-carboxy-4-methyl-2-oxopentanoate. The product decarboxylates to 4-methyl-2 oxopentanoate. This chain is 3-isopropylmalate dehydrogenase, found in Nostoc sp. (strain PCC 7120 / SAG 25.82 / UTEX 2576).